A 657-amino-acid polypeptide reads, in one-letter code: Transketolase (657 aa).

His31 is a substrate binding site. Thiamine diphosphate is bound by residues His71 and 120–122; that span reads GPL. Asp158 provides a ligand contact to Mg(2+). The thiamine diphosphate site is built by Gly159 and Asn188. Mg(2+) contacts are provided by Asn188 and Ile190. Residues His262, Arg354, and Ser381 each coordinate substrate. His262 serves as a coordination point for thiamine diphosphate. The active-site Proton donor is Glu408. Phe434 contributes to the thiamine diphosphate binding site. Substrate-binding residues include His458, Asp466, and Arg517.

The protein belongs to the transketolase family. In terms of assembly, homodimer. Mg(2+) is required as a cofactor. It depends on Ca(2+) as a cofactor. The cofactor is Mn(2+). Co(2+) serves as cofactor. Requires thiamine diphosphate as cofactor.

It carries out the reaction D-sedoheptulose 7-phosphate + D-glyceraldehyde 3-phosphate = aldehydo-D-ribose 5-phosphate + D-xylulose 5-phosphate. It functions in the pathway carbohydrate biosynthesis; Calvin cycle. The protein operates within carbohydrate degradation; pentose phosphate pathway. Its function is as follows. Catalyzes the transfer of a two-carbon ketol group from a ketose donor to an aldose acceptor, via a covalent intermediate with the cofactor thiamine pyrophosphate. This Cereibacter sphaeroides (Rhodobacter sphaeroides) protein is Transketolase (tklB).